We begin with the raw amino-acid sequence, 132 residues long: Small ribosomal subunit protein uS8 (132 aa).

It belongs to the universal ribosomal protein uS8 family. In terms of assembly, part of the 30S ribosomal subunit. Contacts proteins S5 and S12.

One of the primary rRNA binding proteins, it binds directly to 16S rRNA central domain where it helps coordinate assembly of the platform of the 30S subunit. The polypeptide is Small ribosomal subunit protein uS8 (Rhizobium rhizogenes (strain K84 / ATCC BAA-868) (Agrobacterium radiobacter)).